The sequence spans 139 residues: MLMPKKVKYRKQQRGRMRGKAWRGSELSFGDFGLKVLEPGWISDRQIEASRVAMTRFIKRGGKIWIRLFPDKPVTKKPAETRMGKGKGAPDHWVAVVRPGKILFEMEGVSVTDAAEAMRLAAHKLPLRTKFVARETSAH.

The protein belongs to the universal ribosomal protein uL16 family. As to quaternary structure, part of the 50S ribosomal subunit.

Functionally, binds 23S rRNA and is also seen to make contacts with the A and possibly P site tRNAs. The polypeptide is Large ribosomal subunit protein uL16 (Koribacter versatilis (strain Ellin345)).